A 155-amino-acid chain; its full sequence is Small ribosomal subunit protein bS6 (155 aa).

A compositionally biased stretch (basic and acidic residues) spans 115–137; the sequence is EADAAKAEADAARVEAEAKKAET. Positions 115 to 155 are disordered; the sequence is EADAAKAEADAARVEAEAKKAETDETDETVDAETPENEEEN. Acidic residues predominate over residues 138 to 155; that stretch reads DETDETVDAETPENEEEN.

This sequence belongs to the bacterial ribosomal protein bS6 family.

In terms of biological role, binds together with bS18 to 16S ribosomal RNA. This is Small ribosomal subunit protein bS6 from Desulforapulum autotrophicum (strain ATCC 43914 / DSM 3382 / VKM B-1955 / HRM2) (Desulfobacterium autotrophicum).